The chain runs to 186 residues: Nascent polypeptide-associated complex subunit beta (186 aa).

The region spanning 65–130 is the NAC-A/B domain; the sequence is GADDKKLQTT…GEEKELTELV (66 aa). Residues 153–186 are disordered; the sequence is QNMQKQAGAEGKKDEDEDDIPDLVEGENFESNVE. The span at 167–186 shows a compositional bias: acidic residues; the sequence is EDEDDIPDLVEGENFESNVE.

The protein belongs to the NAC-beta family. In terms of assembly, part of the nascent polypeptide-associated complex (NAC), consisting of egd2 and egd1. NAC associates with ribosomes via egd1.

It is found in the cytoplasm. Its subcellular location is the nucleus. Component of the nascent polypeptide-associated complex (NAC), a dynamic component of the ribosomal exit tunnel, protecting the emerging polypeptides from interaction with other cytoplasmic proteins to ensure appropriate nascent protein targeting. The NAC complex also promotes mitochondrial protein import by enhancing productive ribosome interactions with the outer mitochondrial membrane and blocks the inappropriate interaction of ribosomes translating non-secretory nascent polypeptides with translocation sites in the membrane of the endoplasmic reticulum. EGD1 may act as a transcription factor that exert a negative effect on the expression of several genes that are transcribed by RNA polymerase II. The protein is Nascent polypeptide-associated complex subunit beta (egd1) of Aspergillus fumigatus (strain ATCC MYA-4609 / CBS 101355 / FGSC A1100 / Af293) (Neosartorya fumigata).